We begin with the raw amino-acid sequence, 336 residues long: Small ribosomal subunit protein RACK1y (336 aa).

WD repeat units lie at residues 15–55 (GHND…TAVA), 74–113 (GHSH…TTRR), 116–155 (GHTK…KYTI), 164–205 (GHTG…LRTK), 208–247 (GHNG…MLYK), 249–287 (DAGA…VMQD), and 297–336 (SQML…GYAI).

Belongs to the WD repeat G protein beta family. Ribosomal protein RACK1 subfamily. As to quaternary structure, homodimer and heterodimer with RACK1A.

Component of the RACK1 regulatory proteins that play a role in multiple signal transduction pathways. In Oryza sativa subsp. japonica (Rice), this protein is Small ribosomal subunit protein RACK1y (RACK1B).